Here is a 156-residue protein sequence, read N- to C-terminus: Small ribosomal subunit protein uS7c (156 aa).

The protein belongs to the universal ribosomal protein uS7 family. Part of the 30S ribosomal subunit.

It is found in the plastid. The protein resides in the chloroplast. In terms of biological role, one of the primary rRNA binding proteins, it binds directly to 16S rRNA where it nucleates assembly of the head domain of the 30S subunit. The polypeptide is Small ribosomal subunit protein uS7c (rps7) (Tupiella akineta (Green alga)).